The chain runs to 2494 residues: Nuclear receptor corepressor 1 (2494 aa).

The segment covering 1–33 (MSSSGYPPNQGAFSTEQGRYSSHPVQYTFPSSR) has biased composition (polar residues). Disordered stretches follow at residues 1–38 (MSSS…QQEF), 53–106 (LLQQ…PRLD), 134–170 (SEVK…KLSK), and 198–222 (QQQL…PVEQ). Positions 71 to 82 (PVSDRPQDRRQG) are enriched in basic and acidic residues. Positions 83–92 (YEQQYHSVTQ) are enriched in polar residues. Composition is skewed to basic and acidic residues over residues 93–106 (NEHE…PRLD), 134–148 (SEVK…KHET), and 204–213 (EAAKPPEPEK). The interval 154–304 (SGQPGEEQEA…REQNICQRYD (151 aa)) is interaction with tbl1xr1. The stretch at 168–208 (LSKEELIQSMDRVDREIAKVEQQILKLKKKQQQLEEEAAKP) forms a coiled coil. An SANT 1 domain is found at 427 to 478 (QFMNVWTDHEKEIFKEKFVQHPKNFGLIASYLERKTVSDCVLYYYLTKKNEN). 8 disordered regions span residues 488–638 (PKRR…VEHG), 671–913 (NLLQ…LDSK), 981–1007 (RQRQ…PNMD), 1081–1124 (GARL…GTPG), 1413–1434 (IHEI…ESSR), 1488–1585 (MGER…TQRE), 1745–1845 (LAFP…QESI), and 1912–1987 (EVVK…AHTK). Composition is skewed to basic and acidic residues over residues 502–525 (AQEE…KEEE) and 535–548 (KEEL…RTDA). Residues 502 to 549 (AQEEKEIEKVEEEKAERNDKKEEERREEEEKEEKEELRDGTKDRTDAI) are a coiled coil. The span at 582–616 (ASEAAAAANAASTATTAPATTTSTTATTTTAALVP) shows a compositional bias: low complexity. Pro residues predominate over residues 617-629 (VAPPPEEPTPPPT). Positions 622–668 (EEPTPPPTQEQSLVEHGRNWGAIAKMVGSKSESQCKNFYFNYKRRHN) constitute an SANT 2 domain. Positions 692–702 (QCESVASTVSA) are enriched in polar residues. Positions 698–726 (STVSAQEDEENEASNEEENAEDSEGAENS) form a coiled coil. Acidic residues predominate over residues 703 to 722 (QEDEENEASNEEENAEDSEG). The span at 723 to 741 (AENSSDTESAPSPSPAEAA) shows a compositional bias: low complexity. The segment covering 766 to 779 (ASKSVSDSSPTPTV) has biased composition (polar residues). Residues 829-864 (AEPDEVESKPSESAEVKIEEDTKDQDMERLMDRAEA) are compositionally biased toward basic and acidic residues. Polar residues-rich tracts occupy residues 881 to 892 (ESQSDNDSSATC), 993 to 1004 (MSASPGNMSKSP), and 1104 to 1124 (ATSS…GTPG). Residues 1488 to 1504 (MGERSKYEDTKSSEAIR) show a composition bias toward basic and acidic residues. The span at 1508–1519 (TSVVSSGPSVLR) shows a compositional bias: polar residues. Residues 1548 to 1561 (PSPMSRSSPMARSA) are compositionally biased toward low complexity. The stretch at 1771 to 1810 (VSAERERERERDRERDREREKEQRERERDRERERERLAAA) forms a coiled coil. Basic and acidic residues predominate over residues 1773 to 1807 (AERERERERDRERDREREKEQRERERDRERERERL). Positions 1835-1845 (PSPSVRAQESI) are enriched in polar residues. The span at 1914–1935 (VKPKEMKHDPARSEESLSRRNV) shows a compositional bias: basic and acidic residues. Low complexity predominate over residues 1953–1972 (QSPYTSSSFSGSKSQGQPSP). Basic and acidic residues predominate over residues 1978–1987 (AGKEKTAHTK). Residues 2008–2012 (IDVII) carry the CORNR box 1 motif. The segment at 2018 to 2105 (SDKDGRDRNS…PSPQQTIPGH (88 aa)) is disordered. The segment covering 2027–2036 (SQSSDSSSSH) has biased composition (low complexity). Basic and acidic residues predominate over residues 2039–2048 (HRYDAPRDTI). Residues 2088–2102 (RYRQQQESPSPQQTI) show a composition bias toward polar residues. The CORNR box 2 signature appears at 2119 to 2123 (ICQII). Residues 2135-2177 (QALQQPPASTFQSTNPSSTPVRTKASSRFSPESQVQPVHNQRP) show a composition bias toward polar residues. Positions 2135–2216 (QALQQPPAST…YEPISPPQAP (82 aa)) are disordered. The span at 2186–2205 (VLDRPRGRPGKSPDRGHISE) shows a compositional bias: basic and acidic residues. Residues 2322–2326 (LEDII) carry the CORNR box 3 motif. 2 disordered regions span residues 2346-2413 (GVAQ…SVHS) and 2446-2494 (MLNS…DSDE). A compositionally biased stretch (basic residues) spans 2376-2390 (HKQKLISKYGSRKTK). Composition is skewed to polar residues over residues 2446 to 2472 (MLNS…QQSR) and 2485 to 2494 (QYETLSDSDE).

Belongs to the N-CoR nuclear receptor corepressors family. In terms of assembly, forms a large corepressor complex that contains sin3a/b, histone deacetylases hdac1 and hdac2, rbbp4 and possibly rbbp7. Interacts with the thyroid receptor (TR, composed of rxra and thrb) and the retinoid acid receptor (RAR, composed of rxra and rara) in the absence of ligand. Interacts with tbl1xr1. Interacts with zbtb33/kaiso.

It localises to the nucleus. Mediates transcriptional repression by certain nuclear receptors. Participates in complexes which promote histone deacetylation and the formation of repressive chromatin structures which may impede access by the basal transcription machinery. In association with hdac3, may play a role in the regulation of the circadian clock. In Xenopus tropicalis (Western clawed frog), this protein is Nuclear receptor corepressor 1 (ncor1).